Here is a 127-residue protein sequence, read N- to C-terminus: Protein ApaG (127 aa).

The 125-residue stretch at 3 to 127 (DDPRYRVEVE…FVLSVPRTLH (125 aa)) folds into the ApaG domain.

This Xanthomonas campestris pv. campestris (strain 8004) protein is Protein ApaG.